We begin with the raw amino-acid sequence, 207 residues long: Suppressor of IKBKE 1 (207 aa).

2 coiled-coil regions span residues 4–32 and 154–193; these read TIDK…LIDQ and DAIQ…SLHS. Residues 186-207 form a disordered region; it reads TSKESLHSSKRESEWNFSEKTQ. Residues 189 to 199 show a composition bias toward basic and acidic residues; that stretch reads ESLHSSKRESE.

Belongs to the SIKE family. Interacts with IKBKE and TBK1 via its coiled coil region. Interaction with TBK1 is disrupted upon viral infection or TLR3 stimulation. Interacts with CDC42BPB. Associates with the STRIPAK core complex composed of PP2A catalytic and scaffolding subunits, the striatins (PP2A regulatory subunits), the striatin-associated proteins MOB4, STRIP1 and STRIP2, PDCD10 and members of the STE20 kinases, such as STK24 and STK26.

Its function is as follows. Suppressor of IKK-epsilon. Associates with the striatin-interacting phosphatase and kinase (STRIPAK) core complex, forming the extended (SIKE1:SLMAP)STRIPAK complex. The (SIKE1:SLMAP)STRIPAK complex dephosphorylates STK3 leading to the inhibition of Hippo signaling and the control of cell growth. The protein is Suppressor of IKBKE 1 (sike1) of Xenopus tropicalis (Western clawed frog).